The following is a 560-amino-acid chain: ATP synthase subunit beta, mitochondrial (560 aa).

The N-terminal 54 residues, 1-54 (MASRRLLASLLRQSAQRGGGLISRSLGNSIPKSASRASSRASPKGFLLNRAVQY), are a transit peptide targeting the mitochondrion. 2 disordered regions span residues 20-44 (GLISRSLGNSIPKSASRASSRASPK) and 58-81 (AAAPASQPSTPPKSGSEPSGKITD). Low complexity-rich tracts occupy residues 33-42 (SASRASSRAS) and 58-71 (AAAPASQPSTPPKS). 235-242 (GGAGVGKT) contacts ATP.

It belongs to the ATPase alpha/beta chains family. F-type ATPases have 2 components, CF(1) - the catalytic core - and CF(0) - the membrane proton channel. CF(1) has five subunits: alpha(3), beta(3), gamma(1), delta(1), epsilon(1). CF(0) has three main subunits: a, b and c.

It is found in the mitochondrion. The protein resides in the mitochondrion inner membrane. It carries out the reaction ATP + H2O + 4 H(+)(in) = ADP + phosphate + 5 H(+)(out). Mitochondrial membrane ATP synthase (F(1)F(0) ATP synthase or Complex V) produces ATP from ADP in the presence of a proton gradient across the membrane which is generated by electron transport complexes of the respiratory chain. F-type ATPases consist of two structural domains, F(1) - containing the extramembraneous catalytic core, and F(0) - containing the membrane proton channel, linked together by a central stalk and a peripheral stalk. During catalysis, ATP synthesis in the catalytic domain of F(1) is coupled via a rotary mechanism of the central stalk subunits to proton translocation. Subunits alpha and beta form the catalytic core in F(1). Rotation of the central stalk against the surrounding alpha(3)beta(3) subunits leads to hydrolysis of ATP in three separate catalytic sites on the beta subunits. This chain is ATP synthase subunit beta, mitochondrial (ATPB), found in Nicotiana plumbaginifolia (Leadwort-leaved tobacco).